The sequence spans 297 residues: Acetyl-coenzyme A carboxylase carboxyl transferase subunit beta (297 aa).

The tract at residues 1 to 23 (MSWIERILGRTSSSSSSSKSKVP) is disordered. Residues 26 to 295 (VWTKCTSCEQ…PFKTAELIVE (270 aa)) form the CoA carboxyltransferase N-terminal domain. Zn(2+) is bound by residues Cys30, Cys33, Cys49, and Cys52. The C4-type zinc finger occupies 30–52 (CTSCEQVLYSEELKRNMHVCPKC).

It belongs to the AccD/PCCB family. In terms of assembly, acetyl-CoA carboxylase is a heterohexamer composed of biotin carboxyl carrier protein (AccB), biotin carboxylase (AccC) and two subunits each of ACCase subunit alpha (AccA) and ACCase subunit beta (AccD). Zn(2+) serves as cofactor.

The protein localises to the cytoplasm. It carries out the reaction N(6)-carboxybiotinyl-L-lysyl-[protein] + acetyl-CoA = N(6)-biotinyl-L-lysyl-[protein] + malonyl-CoA. Its pathway is lipid metabolism; malonyl-CoA biosynthesis; malonyl-CoA from acetyl-CoA: step 1/1. Its function is as follows. Component of the acetyl coenzyme A carboxylase (ACC) complex. Biotin carboxylase (BC) catalyzes the carboxylation of biotin on its carrier protein (BCCP) and then the CO(2) group is transferred by the transcarboxylase to acetyl-CoA to form malonyl-CoA. The polypeptide is Acetyl-coenzyme A carboxylase carboxyl transferase subunit beta (Actinobacillus pleuropneumoniae serotype 3 (strain JL03)).